The following is a 510-amino-acid chain: Probable gamma-aminobutyrate transaminase 3, mitochondrial (510 aa).

A mitochondrion-targeting transit peptide spans 1 to 41; that stretch reads MICRSLLLLRSNAASKASSIVKHVAATGCLPEYSSEAPARY. 166–167 lines the pyridoxal 5'-phosphate pocket; sequence GS. Tyr199 serves as a coordination point for substrate. Asp306 lines the pyridoxal 5'-phosphate pocket. Lys335 contacts substrate. Lys335 is subject to N6-(pyridoxal phosphate)lysine.

This sequence belongs to the class-III pyridoxal-phosphate-dependent aminotransferase family.

It localises to the mitochondrion. The enzyme catalyses 4-aminobutanoate + pyruvate = succinate semialdehyde + L-alanine. It catalyses the reaction 4-aminobutanoate + glyoxylate = succinate semialdehyde + glycine. Functionally, transaminase that degrades gamma-amino butyric acid (GABA). The protein is Probable gamma-aminobutyrate transaminase 3, mitochondrial of Oryza sativa subsp. indica (Rice).